The chain runs to 204 residues: LexA repressor (204 aa).

A DNA-binding region (H-T-H motif) is located at residues 28–48 (RAEIAQELGFKSPNAAEEHLK). Residues Ser-125 and Lys-162 each act as for autocatalytic cleavage activity in the active site.

It belongs to the peptidase S24 family. As to quaternary structure, homodimer.

It carries out the reaction Hydrolysis of Ala-|-Gly bond in repressor LexA.. Its function is as follows. Represses a number of genes involved in the response to DNA damage (SOS response), including recA and lexA. In the presence of single-stranded DNA, RecA interacts with LexA causing an autocatalytic cleavage which disrupts the DNA-binding part of LexA, leading to derepression of the SOS regulon and eventually DNA repair. The sequence is that of LexA repressor from Ectopseudomonas mendocina (strain ymp) (Pseudomonas mendocina).